Reading from the N-terminus, the 307-residue chain is Glycine--tRNA ligase alpha subunit (307 aa).

The protein belongs to the class-II aminoacyl-tRNA synthetase family. As to quaternary structure, tetramer of two alpha and two beta subunits.

It is found in the cytoplasm. It catalyses the reaction tRNA(Gly) + glycine + ATP = glycyl-tRNA(Gly) + AMP + diphosphate. The polypeptide is Glycine--tRNA ligase alpha subunit (Xylella fastidiosa (strain M23)).